Here is a 547-residue protein sequence, read N- to C-terminus: MARFIFITGGVVSSLGKGLASAALGALLQARGFSVRLRKLDPYLNVDPGTMSPFEHGEVFVTDDGAETDLDLGHYERFTGVPASKTDSISSGRIYTNVLEKERRGDYLGKTIQVIPHVTNEIKDFINIGEDDVDFMLCEIGGTVGDIEGLPFFEAIRQFSQDKARGQCIFMHLTLLPFIKASGELKTKPTQHSVKELRSIGLAPDILVCRSEGPIPEKEREKLALFCNVRPDSVIAAQDLSSIYTAPLAYHREGLDQAVLDAFGITPAPKPNLSIWEDVADRINNPEGVVKVAIVGKYTQLEDAYKSIAEALTHGGMANRVKVEIEWVDAETFEREDPAPHLQGFHAILVPGGFGERGTEGKIKAAEFARTRKVPYLGICLGMQMAVIEAARNLAQLDDAGSEEFDHEAGKKRFTPVVYHLKEWVQGNHKVERKVGDDKGGTMRLGAYDAVLTEGSRVAEAYGTTAIEERHRHRYEVDTKYRDALEEKGLIFSGMSPDGALPEIVEVKDHPWFIGVQFHPELKSKPFEPHPLFRDFVRAAKENSRLV.

Residues 1 to 265 (MARFIFITGG…DQAVLDAFGI (265 aa)) are amidoligase domain. S13 provides a ligand contact to CTP. UTP is bound at residue S13. Residues 14–19 (SLGKGL) and D71 contribute to the ATP site. Positions 71 and 139 each coordinate Mg(2+). Residues 146-148 (DIE), 186-191 (KTKPTQ), and K222 contribute to the CTP site. UTP contacts are provided by residues 186-191 (KTKPTQ) and K222. In terms of domain architecture, Glutamine amidotransferase type-1 spans 291 to 546 (KVAIVGKYTQ…VRAAKENSRL (256 aa)). G353 is a binding site for L-glutamine. Catalysis depends on C380, which acts as the Nucleophile; for glutamine hydrolysis. L-glutamine contacts are provided by residues 381–384 (LGMQ), E404, and R474. Catalysis depends on residues H519 and E521.

It belongs to the CTP synthase family. As to quaternary structure, homotetramer.

It catalyses the reaction UTP + L-glutamine + ATP + H2O = CTP + L-glutamate + ADP + phosphate + 2 H(+). It carries out the reaction L-glutamine + H2O = L-glutamate + NH4(+). The catalysed reaction is UTP + NH4(+) + ATP = CTP + ADP + phosphate + 2 H(+). It participates in pyrimidine metabolism; CTP biosynthesis via de novo pathway; CTP from UDP: step 2/2. Its activity is regulated as follows. Allosterically activated by GTP, when glutamine is the substrate; GTP has no effect on the reaction when ammonia is the substrate. The allosteric effector GTP functions by stabilizing the protein conformation that binds the tetrahedral intermediate(s) formed during glutamine hydrolysis. Inhibited by the product CTP, via allosteric rather than competitive inhibition. Catalyzes the ATP-dependent amination of UTP to CTP with either L-glutamine or ammonia as the source of nitrogen. Regulates intracellular CTP levels through interactions with the four ribonucleotide triphosphates. The protein is CTP synthase of Jannaschia sp. (strain CCS1).